The following is a 479-amino-acid chain: Cardiolipin synthase (479 aa).

2 helical membrane passes run 5-25 (SLLLGLTFVLNIALAISIIFL) and 34-54 (WAWVMVLLFIPILGFFLYLIF). PLD phosphodiesterase domains are found at residues 216 to 243 (INYRNHRKLAIIDGYIGYLGGFNVGDEY) and 392 to 419 (QNGFLHAKTIIVDGRIASVGTANIDVRS). Active-site residues include H221, K223, D228, H397, K399, and D404.

The protein belongs to the phospholipase D family. Cardiolipin synthase subfamily.

Its subcellular location is the cell membrane. It carries out the reaction 2 a 1,2-diacyl-sn-glycero-3-phospho-(1'-sn-glycerol) = a cardiolipin + glycerol. Catalyzes the reversible phosphatidyl group transfer from one phosphatidylglycerol molecule to another to form cardiolipin (CL) (diphosphatidylglycerol) and glycerol. The polypeptide is Cardiolipin synthase (cls) (Oceanobacillus iheyensis (strain DSM 14371 / CIP 107618 / JCM 11309 / KCTC 3954 / HTE831)).